Here is an 867-residue protein sequence, read N- to C-terminus: Cilium assembly protein DZIP1 (867 aa).

Residues 12–203 (MPFQKHVYYP…KANYYQCHFC (192 aa)) are mediates interaction with PCM1. The mediates interaction with GLI3 and localization to the cilium basal body stretch occupies residues 12–367 (MPFQKHVYYP…QDFHNVMQLL (356 aa)). A required for interaction with DAZ1 region spans residues 154-278 (CDGEQSKKLL…SKEYEMQKTK (125 aa)). The C2H2-type zinc finger occupies 198–221 (YQCHFCDKAFMNQAFLQSHIQRRH). A Phosphoserine; by PLK1 modification is found at S226. Coiled coils occupy residues 230 to 340 (YQKN…KSNI), 401 to 445 (TSMI…FTCN), and 568 to 588 (DQLH…EREI). The interval 446–617 (PLNSISEPKG…EKALLSSDQC (172 aa)) is mediates interaction with GDI2 and RAB8A. Polar residues-rich tracts occupy residues 643–654 (LIRQKAVSTDRT), 671–680 (KSSTITTPPF), and 708–718 (NKGSFGKNTVK). Disordered stretches follow at residues 643-768 (LIRQ…GGTN) and 796-867 (SLEE…TSDV). Over residues 722–733 (DGTEGSEIEDTD) the composition is skewed to acidic residues. A compositionally biased stretch (basic and acidic residues) spans 807–823 (SGKEQKEPPPAKNEPHF). The segment covering 848-859 (SSTLKSSLVTVT) has biased composition (low complexity).

The protein belongs to the DZIP C2H2-type zinc-finger protein family. Interacts with DAZ1. Interacts with the BBSome; recruits the BBSome to centriolar satellites of the cilium. Interacts with PCM1; localizes DZIP1 and the associated BBSome to centriolar satellites. Interacts with RAB8A (GDP-bound inactive form); recruits RAB8A to the basal body of the cilium and prevents its inhibition by GDI2. Interacts with GDI2; negatively regulates the interaction of GDI2 with GDP-bound RAB8A. Interacts with GLI3; retains GLI3 within the cytoplasm. Interacts with CEP164. Interacts with IFT88. Post-translationally, phosphorylation at Ser-226 by PLK1 before mitosis prevents interaction with PCM1 and localization to centriolar satellites. Thereby, it negatively regulates the localization of the BBSome to centriolar satellites. As to expression, predominantly expressed in testis (at protein level). Also expressed in fetal brain, adult oocytes and ovary. Expressed in undifferentiated ES cells. In testis, it is specifically expressed in germ cells (at protein level). Expressed in mature germ cells and secondary spermatocytes, while it is weakly or not expressed in primary spermatocytes.

The protein resides in the cytoplasm. It localises to the cytoskeleton. It is found in the cilium basal body. The protein localises to the microtubule organizing center. Its subcellular location is the centrosome. The protein resides in the centriolar satellite. It localises to the centriole. It is found in the nucleus. The protein localises to the nucleus speckle. Functionally, molecular adapter that recruits protein complexes required for cilium assembly and function to the cilium basal body. At the exit of mitosis, localizes to the basal body and ciliary base of the forming primary cilium where it recruits and activates RAB8A to direct vesicle-mediated transport of proteins to the cilium. Also recruits the BBSome, a complex involved in cilium biogenesis, by bridging it to PCM1 at the centriolar satellites of the cilium. It is also required for the recruitment to the cilium basal body of the intraflagellar transport (IFT) machinery as well as the ciliary appendage proteins CEP164 and NINEIN. Functions as a regulator of Hedgehog signaling both through its role in cilium assembly but also probably through its ability to retain GLI3 within the cytoplasm. It is involved in spermatogenesis through its role in organization of the basal body and assembly of the sperm flagellum. Also indirectly involved in heart development through its function in ciliogenesis. The sequence is that of Cilium assembly protein DZIP1 from Homo sapiens (Human).